Here is a 190-residue protein sequence, read N- to C-terminus: Peptidoglycan recognition protein 1 (190 aa).

A signal peptide spans 1–21; sequence MSRRYTPLAWVLLALLGLGAA. Q22 is modified (pyrrolidone carboxylic acid). Cystine bridges form between C24–C148, C40–C85, and C61–C67. In terms of domain architecture, N-acetylmuramoyl-L-alanine amidase spans 46–174; that stretch reads QPVRYVVVSH…RDVQQTLSPG (129 aa).

The protein belongs to the N-acetylmuramoyl-L-alanine amidase 2 family. In terms of assembly, homodimer; disulfide-linked.

It is found in the secreted. It localises to the cytoplasmic granule. Innate immunity protein that plays several important functions in antimicrobial and antitumor defense systems. Acts as a pattern receptor that binds to murein peptidoglycans (PGN) of Gram-positive bacteria and thus provides bactericidal activity. Forms an equimolar complex with heat shock protein HSPA1A and induces programmed cell death through apoptosis and necroptosis in tumor cell lines by activating the TNFR1 receptor on the target cell membrane. In addition, acts in complex with the Ca(2+)-binding protein S100A4 as a chemoattractant able to induce lymphocyte movement. Mechanistically, this complex acts as a ligand of the chemotactic receptors CCR5 and CXCR3 which are present on the cells of the immune system. Promotes also the activation of lymphocytes that become able to kill virus-infected cells as well as tumor cells by modulating the spectrum of their target-cell specificity. Induction of cytotoxicity on monocyte surface requires interaction with TREM1 receptor. The polypeptide is Peptidoglycan recognition protein 1 (PGLYRP1) (Bos indicus (Zebu)).